Consider the following 89-residue polypeptide: Serine-rich and transmembrane domain-containing 2 (89 aa).

Residue Asn11 is glycosylated (N-linked (GlcNAc...) asparagine). The chain crosses the membrane as a helical span at residues 38–58; the sequence is YVGLFLSLLAILLILLFTMLL.

Its subcellular location is the membrane. This Mus musculus (Mouse) protein is Serine-rich and transmembrane domain-containing 2.